A 351-amino-acid polypeptide reads, in one-letter code: Dihydroorotate dehydrogenase (quinone) (351 aa).

FMN is bound by residues A67 to K71 and T91. K71 provides a ligand contact to substrate. N116–F120 is a binding site for substrate. FMN is bound by residues N145 and N178. N178 contributes to the substrate binding site. S181 (nucleophile) is an active-site residue. Substrate is bound at residue N183. Positions 214 and 242 each coordinate FMN. Substrate is bound at residue N243 to T244. FMN contacts are provided by residues G262, G291, and Y312–S313.

It belongs to the dihydroorotate dehydrogenase family. Type 2 subfamily. In terms of assembly, monomer. It depends on FMN as a cofactor.

The protein resides in the cell membrane. It catalyses the reaction (S)-dihydroorotate + a quinone = orotate + a quinol. It functions in the pathway pyrimidine metabolism; UMP biosynthesis via de novo pathway; orotate from (S)-dihydroorotate (quinone route): step 1/1. Functionally, catalyzes the conversion of dihydroorotate to orotate with quinone as electron acceptor. The chain is Dihydroorotate dehydrogenase (quinone) (pyrD) from Helicobacter pylori (strain ATCC 700392 / 26695) (Campylobacter pylori).